The following is a 404-amino-acid chain: Argininosuccinate synthase (404 aa).

ATP is bound by residues 12-20 (AYSGGLDTS) and Ala-39. L-citrulline-binding residues include Tyr-91 and Ser-96. ATP is bound at residue Gly-121. L-aspartate-binding residues include Thr-123, Asn-127, and Asp-128. L-citrulline is bound at residue Asn-127. Residues Arg-131, Ser-180, Ser-189, Glu-265, and Tyr-277 each coordinate L-citrulline.

Belongs to the argininosuccinate synthase family. Type 1 subfamily. Homotetramer.

Its subcellular location is the cytoplasm. The enzyme catalyses L-citrulline + L-aspartate + ATP = 2-(N(omega)-L-arginino)succinate + AMP + diphosphate + H(+). Its pathway is amino-acid biosynthesis; L-arginine biosynthesis; L-arginine from L-ornithine and carbamoyl phosphate: step 2/3. This is Argininosuccinate synthase from Vibrio parahaemolyticus serotype O3:K6 (strain RIMD 2210633).